A 155-amino-acid polypeptide reads, in one-letter code: Archaemetzincin (155 aa).

Zn(2+) is bound at residue His-109. The active-site Proton acceptor is the Glu-110. Zn(2+) is bound by residues His-113, His-119, Cys-120, Cys-125, Cys-144, and Cys-147.

This sequence belongs to the peptidase M54 family. Monomer. Requires Zn(2+) as cofactor.

Its function is as follows. Probable zinc metalloprotease whose natural substrate is unknown. This is Archaemetzincin from Pyrobaculum aerophilum (strain ATCC 51768 / DSM 7523 / JCM 9630 / CIP 104966 / NBRC 100827 / IM2).